We begin with the raw amino-acid sequence, 212 residues long: Guanylate kinase (212 aa).

The Guanylate kinase-like domain occupies 14-192 (GTALVICAPS…AYDELRATYL (179 aa)). 21–28 (APSGTGKT) lines the ATP pocket.

This sequence belongs to the guanylate kinase family.

The protein resides in the cytoplasm. It carries out the reaction GMP + ATP = GDP + ADP. Its function is as follows. Essential for recycling GMP and indirectly, cGMP. The chain is Guanylate kinase from Lawsonia intracellularis (strain PHE/MN1-00).